We begin with the raw amino-acid sequence, 881 residues long: Heat shock protein 70 homolog LHS1 (881 aa).

The signal sequence occupies residues 1–20 (MRNVLRLLFLTAFVAIGSLA). Asparagine 128, asparagine 458, asparagine 474, asparagine 481, asparagine 489, asparagine 527, and asparagine 844 each carry an N-linked (GlcNAc...) asparagine glycan. Over residues 833–844 (RKLEQEKSRNNN) the composition is skewed to basic and acidic residues. The disordered stretch occupies residues 833–881 (RKLEQEKSRNNNETESTVINSADDKTTIVNDKTTESNPSSEEDILHDEL). Residues 859 to 871 (TIVNDKTTESNPS) are compositionally biased toward polar residues. A compositionally biased stretch (acidic residues) spans 872-881 (SEEDILHDEL). The Prevents secretion from ER motif lies at 878–881 (HDEL).

It belongs to the heat shock protein 70 family. Interacts with the heat shock protein 70 (HSP70) KAR2, and this stimulates nucleotide exchange on KAR2. KAR2 in turn acts to stimulate the ATPase activity of LHS1. Post-translationally, N-glycosylated.

It is found in the endoplasmic reticulum lumen. It catalyses the reaction ATP + H2O = ADP + phosphate + H(+). Chaperone required for protein translocation and folding in the endoplasmic reticulum. This is Heat shock protein 70 homolog LHS1 (LHS1) from Saccharomyces cerevisiae (strain ATCC 204508 / S288c) (Baker's yeast).